A 120-amino-acid chain; its full sequence is MSAYTVSQLAHNAGVSVHIVRDYLVRGLLRPVACTTGGYGVFDDAALQRLCFVRAAFEAGIGLDALARLCRALDAADGAQAAAQLAVVRQLVERRRAALAHLDAQLASMPAERAHEEALP.

The region spanning alanine 3–alanine 72 is the HTH merR-type domain. Positions valine 6 to valine 25 form a DNA-binding region, H-T-H motif.

This Shigella flexneri protein is HTH-type transcriptional regulator MerD (merD).